Consider the following 210-residue polypeptide: Large ribosomal subunit protein uL3 (210 aa).

A disordered region spans residues 125–151 (RHGQSRGPMSHGSRYHRRPGSMGPVAP).

This sequence belongs to the universal ribosomal protein uL3 family. Part of the 50S ribosomal subunit. Forms a cluster with proteins L14 and L19.

Functionally, one of the primary rRNA binding proteins, it binds directly near the 3'-end of the 23S rRNA, where it nucleates assembly of the 50S subunit. The sequence is that of Large ribosomal subunit protein uL3 from Bacillus mycoides (strain KBAB4) (Bacillus weihenstephanensis).